The sequence spans 310 residues: Probable L,D-transpeptidase ErfK/SrfK (310 aa).

Residues 1–21 form the signal peptide; it reads MRRVNILCSFALLFASHTSLA. Residues 96–231 enclose the L,D-TPase catalytic domain; sequence KGIVVNVAEM…VPVGTRVQII (136 aa). The Proton donor/acceptor role is filled by His191. Cys207 acts as the Nucleophile in catalysis.

The protein belongs to the YkuD family. Interacts with DsbG.

It is found in the periplasm. It participates in cell wall biogenesis; peptidoglycan biosynthesis. In terms of biological role, responsible, at least in part, for anchoring of the major outer membrane lipoprotein (Lpp, also known as the Braun lipoprotein) to the peptidoglycan via a meso-diaminopimelyl-L-Lys- bond on the terminal residue of Lpp. The chain is Probable L,D-transpeptidase ErfK/SrfK (erfK) from Escherichia coli (strain K12).